Consider the following 385-residue polypeptide: MKDSFLFTSESVTEGHPDKMADQISDAVLDYIIERDKKAKVACETLVSNGFCVITGELKTSIYAPMQEIAREVVKKIGYTDALYGFDYRSAAVLNGIGEQSPDINQGVDREDGEIGAGDQGLVFGYACKETQMLMPLPIHLAHQLTFALAQKRKDNTLPFLRPDGKSQVSVRYENNKPISIDTIVISTQHSPEVSQKHLKEAVIEEIVYKVLPKEYLHDNIKFFVNPTGKFVIGGPQGDAGLTGRKIIVDTYGGSCPHGGGAFSGKDPSKVDRSAAYAARYVAKNLVASGVCDRATVQLAYAIGVVEPVSIYVNTHNTSKYSSAELEKCVKLVFKLTPKGIIESLDLLRPIYSLTSSYGHFGRELEAFTWEKTNKAEEIKAFFKH.

His-16 provides a ligand contact to ATP. Asp-18 is a Mg(2+) binding site. Residue Glu-44 participates in K(+) binding. L-methionine contacts are provided by Glu-57 and Gln-100. The interval 100 to 110 (QSPDINQGVDR) is flexible loop. Residues 164–166 (DGK), 230–231 (KF), Asp-239, 245–246 (RK), Ala-262, and Lys-266 contribute to the ATP site. Residue Asp-239 participates in L-methionine binding. L-methionine is bound at residue Lys-270.

The protein belongs to the AdoMet synthase family. As to quaternary structure, homotetramer; dimer of dimers. Mg(2+) serves as cofactor. It depends on K(+) as a cofactor.

The protein localises to the cytoplasm. The catalysed reaction is L-methionine + ATP + H2O = S-adenosyl-L-methionine + phosphate + diphosphate. Its pathway is amino-acid biosynthesis; S-adenosyl-L-methionine biosynthesis; S-adenosyl-L-methionine from L-methionine: step 1/1. Functionally, catalyzes the formation of S-adenosylmethionine (AdoMet) from methionine and ATP. The overall synthetic reaction is composed of two sequential steps, AdoMet formation and the subsequent tripolyphosphate hydrolysis which occurs prior to release of AdoMet from the enzyme. The chain is S-adenosylmethionine synthase from Helicobacter acinonychis (strain Sheeba).